The chain runs to 640 residues: Threonine--tRNA ligase (640 aa).

The TGS domain occupies 1 to 61; the sequence is MPTITLPDGS…ENDASLQIIT (61 aa). Residues 242–533 form a catalytic region; the sequence is DHRKIGKRLG…LIEHYEGAFP (292 aa). The Zn(2+) site is built by Cys333, His384, and His510.

The protein belongs to the class-II aminoacyl-tRNA synthetase family. In terms of assembly, homodimer. The cofactor is Zn(2+).

It localises to the cytoplasm. It carries out the reaction tRNA(Thr) + L-threonine + ATP = L-threonyl-tRNA(Thr) + AMP + diphosphate + H(+). In terms of biological role, catalyzes the attachment of threonine to tRNA(Thr) in a two-step reaction: L-threonine is first activated by ATP to form Thr-AMP and then transferred to the acceptor end of tRNA(Thr). Also edits incorrectly charged L-seryl-tRNA(Thr). This is Threonine--tRNA ligase from Pseudomonas syringae pv. syringae (strain B728a).